Reading from the N-terminus, the 615-residue chain is Forkhead box protein O (615 aa).

Disordered stretches follow at residues 39 to 77 (RARSNTWPCPRPENFVEPTDELDSTKASNQQLAPGDSQQ), 182 to 205 (KSVRRRAASMETSRYEKRRGRAKK), 217 to 269 (GLND…RLSP), 318 to 359 (FSAA…APGY), and 389 to 409 (NSVTTTMSPAYPNSEPSSDSL). Threonine 44 is modified (phosphothreonine; by PKB/AKT1). The span at 63–77 (TKASNQQLAPGDSQQ) shows a compositional bias: polar residues. Phosphoserine is present on serine 75. A DNA-binding region (fork-head) is located at residues 95–201 (WGNLSYADLI…ETSRYEKRRG (107 aa)). Residue serine 190 is modified to Phosphoserine; by PKB/AKT1. Polar residues-rich tracts occupy residues 221-230 (ATPSPSSSVS) and 256-265 (RASSNASSCG). At serine 259 the chain carries Phosphoserine; by PKB/AKT1. Phosphoserine occurs at positions 262, 263, and 268. A compositionally biased stretch (pro residues) spans 326–335 (SQPPPPPYQP). The segment covering 336–351 (PQHQQAQQQQQQSPYA) has biased composition (low complexity).

Interacts with melt.

The protein localises to the cytoplasm. Its subcellular location is the nucleus. In terms of biological role, transcription factor involved in the regulation of the insulin signaling pathway. Consistently activates both the downstream target Thor\d4EBP and the feedback control target InR. Involved in negative regulation of the cell cycle, modulating cell growth and proliferation. In response to cellular stresses, such as nutrient deprivation or increased levels of reactive oxygen species, foxo is activated and inhibits growth through the action of target genes such as Thor. Foxo activated in the adult fat body can regulate lifespan in adults; an insulin peptide itself may function as one secondary messenger of insulin-regulated aging. Also regulates Lip4, homolog of human acid lipases, thereby acting as a key modulator of lipid metabolism by insulin signaling and integrates insulin responses to glucose and lipid homeostasis. This Drosophila erecta (Fruit fly) protein is Forkhead box protein O.